A 188-amino-acid polypeptide reads, in one-letter code: Large ribosomal subunit protein eL18A (188 aa).

The segment at 153 to 188 is disordered; the sequence is GKAPSTPHSRTKPYVLSKGRKFERARGRRASRGYKN. Residues 178 to 188 show a composition bias toward basic residues; the sequence is RGRRASRGYKN.

It belongs to the eukaryotic ribosomal protein eL18 family. Component of the large ribosomal subunit.

It localises to the cytoplasm. Functionally, component of the large ribosomal subunit. The ribosome is a large ribonucleoprotein complex responsible for the synthesis of proteins in the cell. This chain is Large ribosomal subunit protein eL18A (rpl18-a), found in Xenopus laevis (African clawed frog).